Reading from the N-terminus, the 555-residue chain is Meiotic mRNA stability protein kinase SSN3 (555 aa).

In terms of domain architecture, Protein kinase spans 75–463 (YEVIGYIAAG…AFNALEHKYF (389 aa)). 81 to 89 (IAAGTYGKV) provides a ligand contact to ATP. A compositionally biased stretch (polar residues) spans 100–138 (TNSANGSSLNGTNAKIPQFDSTQPKSSSSMDMQANTNAL). The disordered stretch occupies residues 100 to 166 (TNSANGSSLN…REDVSPHYNS (67 aa)). Residue lysine 183 coordinates ATP. Residue aspartate 286 is the Proton acceptor of the active site.

Belongs to the protein kinase superfamily. CMGC Ser/Thr protein kinase family. CDC2/CDKX subfamily. As to quaternary structure, component of the SRB8-11 complex which consists of SRB8, SSN2/SRB9, SSN3/SRB10 and SSN8/SRB11. The SRB8-11 complex associates with the Mediator complex. The SSN3/SRB10 and SSN8/SRB11 kinase-cyclin pair also associate with the RNA polymerase II holoenzyme. Interacts with TUP1.

The protein resides in the nucleus. It catalyses the reaction L-seryl-[protein] + ATP = O-phospho-L-seryl-[protein] + ADP + H(+). The enzyme catalyses L-threonyl-[protein] + ATP = O-phospho-L-threonyl-[protein] + ADP + H(+). The catalysed reaction is [DNA-directed RNA polymerase] + ATP = phospho-[DNA-directed RNA polymerase] + ADP + H(+). Its function is as follows. Component of the SRB8-11 complex. The SRB8-11 complex is a regulatory module of the Mediator complex which is itself involved in regulation of basal and activated RNA polymerase II-dependent transcription. The SRB8-11 complex may be involved in the transcriptional repression of a subset of genes regulated by Mediator. It may inhibit the association of the Mediator complex with RNA polymerase II to form the holoenzyme complex. The SRB8-11 complex phosphorylates the C-terminal domain (CTD) of the largest subunit of RNA polymerase II RPB1 at serines 2 and 5. The SSN3/SRB10 and SSN8/SRB11 kinase-cyclin pair may also positively and negatively regulate numerous transcriptional activators in response to changes in nutritional and physiological conditions. Phosphorylates GCN4, promoting its ubiquitin-mediated degradation, and MSN2, promoting its nuclear exclusion. Phosphorylates STE12, thereby promoting its degradation and inhibition of filamentous growth. Phosphorylates GAL4, and this phosphorylation is required for efficient galactose-inducible transcription. Also phosphorylates BDF1 and the TAF2 subunit of the TFIID complex. The sequence is that of Meiotic mRNA stability protein kinase SSN3 (SSN3) from Saccharomyces cerevisiae (strain ATCC 204508 / S288c) (Baker's yeast).